The sequence spans 257 residues: Aspartate/glutamate leucyltransferase (257 aa).

Belongs to the R-transferase family. Bpt subfamily.

The protein resides in the cytoplasm. It carries out the reaction N-terminal L-glutamyl-[protein] + L-leucyl-tRNA(Leu) = N-terminal L-leucyl-L-glutamyl-[protein] + tRNA(Leu) + H(+). The enzyme catalyses N-terminal L-aspartyl-[protein] + L-leucyl-tRNA(Leu) = N-terminal L-leucyl-L-aspartyl-[protein] + tRNA(Leu) + H(+). Functionally, functions in the N-end rule pathway of protein degradation where it conjugates Leu from its aminoacyl-tRNA to the N-termini of proteins containing an N-terminal aspartate or glutamate. This Nitrobacter winogradskyi (strain ATCC 25391 / DSM 10237 / CIP 104748 / NCIMB 11846 / Nb-255) protein is Aspartate/glutamate leucyltransferase.